The chain runs to 197 residues: Large ribosomal subunit protein bL25 (197 aa).

This sequence belongs to the bacterial ribosomal protein bL25 family. CTC subfamily. As to quaternary structure, part of the 50S ribosomal subunit; part of the 5S rRNA/L5/L18/L25 subcomplex. Contacts the 5S rRNA. Binds to the 5S rRNA independently of L5 and L18.

This is one of the proteins that binds to the 5S RNA in the ribosome where it forms part of the central protuberance. The polypeptide is Large ribosomal subunit protein bL25 (Lawsonia intracellularis (strain PHE/MN1-00)).